The following is a 464-amino-acid chain: L-cystine uptake protein TcyP (464 aa).

10 consecutive transmembrane segments (helical) span residues 3–23, 34–54, 73–93, 107–127, 184–204, 225–245, 263–283, 347–367, 371–391, and 395–415; these read TLLV…LYYM, VFTA…IYEP, YVKL…ISAF, GLII…GIAA, PTST…FIGV, IVMR…LALM, FVLA…LLIA, AGIY…IDPL, FILT…GVGG, and FAAL…ALVI.

Belongs to the dicarboxylate/amino acid:cation symporter (DAACS) (TC 2.A.23) family.

Its subcellular location is the membrane. Mediates uptake of L-cystine, the oxidized form of L-cysteine. This is L-cystine uptake protein TcyP from Bacillus thuringiensis subsp. konkukian (strain 97-27).